Here is a 110-residue protein sequence, read N- to C-terminus: Large ribosomal subunit protein uL22 (110 aa).

It belongs to the universal ribosomal protein uL22 family. As to quaternary structure, part of the 50S ribosomal subunit.

In terms of biological role, this protein binds specifically to 23S rRNA; its binding is stimulated by other ribosomal proteins, e.g. L4, L17, and L20. It is important during the early stages of 50S assembly. It makes multiple contacts with different domains of the 23S rRNA in the assembled 50S subunit and ribosome. Its function is as follows. The globular domain of the protein is located near the polypeptide exit tunnel on the outside of the subunit, while an extended beta-hairpin is found that lines the wall of the exit tunnel in the center of the 70S ribosome. In Pseudoalteromonas translucida (strain TAC 125), this protein is Large ribosomal subunit protein uL22.